A 328-amino-acid chain; its full sequence is Ubiquitin carboxyl-terminal hydrolase isozyme L5 (328 aa).

The region spanning Glu7–Ser225 is the UCH catalytic domain. Position 47 is an N6-succinyllysine (Lys47). The Nucleophile role is filled by Cys88. The residue at position 158 (Lys158) is an N6-acetyllysine. His164 serves as the catalytic Proton donor. Lys288 is subject to N6-succinyllysine. The ULD domain maps to Asn290–Lys318. The tract at residues Val312–Lys328 is interaction with ADRM1.

This sequence belongs to the peptidase C12 family. As to quaternary structure, component of the 19S (PA700) regulatory complex of the 26S proteasome. Interacts with ADRM1 and NFRKB. Component of the INO80 complex; specifically part of a complex module associated with N-terminus of INO80.

Its subcellular location is the cytoplasm. The protein localises to the nucleus. The catalysed reaction is Thiol-dependent hydrolysis of ester, thioester, amide, peptide and isopeptide bonds formed by the C-terminal Gly of ubiquitin (a 76-residue protein attached to proteins as an intracellular targeting signal).. Activated by ADRM1. Inhibited by interaction with NFRKB. Protease that specifically cleaves 'Lys-48'-linked polyubiquitin chains. Deubiquitinating enzyme associated with the 19S regulatory subunit of the 26S proteasome. Putative regulatory component of the INO80 complex; however is inactive in the INO80 complex and is activated by a transient interaction of the INO80 complex with the proteasome via ADRM1. The protein is Ubiquitin carboxyl-terminal hydrolase isozyme L5 (UCHL5) of Bos taurus (Bovine).